We begin with the raw amino-acid sequence, 220 residues long: Cell division protein SepF (220 aa).

The segment at 33 to 82 is disordered; that stretch reads GAARGYARRPREDRFEEEGYIDRAGREYDDRPAPREYDEPPIYRGGYDEP. The span at 52–70 shows a compositional bias: basic and acidic residues; it reads YIDRAGREYDDRPAPREYD.

This sequence belongs to the SepF family. In terms of assembly, homodimer. Interacts with FtsZ.

The protein resides in the cytoplasm. In terms of biological role, cell division protein that is part of the divisome complex and is recruited early to the Z-ring. Probably stimulates Z-ring formation, perhaps through the cross-linking of FtsZ protofilaments. Its function overlaps with FtsA. In Mycobacterium sp. (strain JLS), this protein is Cell division protein SepF.